Consider the following 150-residue polypeptide: Late promoter-activating protein (150 aa).

Its function is as follows. Trans-activating factor involved in the late regulation of the P1 lytic growth cycle. May be the transcriptional activator of all late P1 functions. The sequence is that of Late promoter-activating protein (lpa) from Escherichia phage P1 (Bacteriophage P1).